The sequence spans 113 residues: Prefoldin subunit beta (113 aa).

It belongs to the prefoldin subunit beta family. In terms of assembly, heterohexamer of two alpha and four beta subunits.

It is found in the cytoplasm. Its function is as follows. Molecular chaperone capable of stabilizing a range of proteins. Seems to fulfill an ATP-independent, HSP70-like function in archaeal de novo protein folding. This is Prefoldin subunit beta from Methanococcus maripaludis (strain C6 / ATCC BAA-1332).